A 316-amino-acid polypeptide reads, in one-letter code: Secondary metabolism regulator laeA (316 aa).

Belongs to the methyltransferase superfamily. LaeA methyltransferase family. As to quaternary structure, component of the heterotrimeric velvet complex composed of laeA, veA and velB; VeA acting as a bridging protein between laeA and velB.

It localises to the nucleus. The enzyme catalyses L-methionyl-[protein] + S-adenosyl-L-methionine = S-methyl-L-methionyl-[protein] + S-adenosyl-L-homocysteine. Functionally, methyltransferase that performs automethylation. No other methyl-accepting substrate has been identified yet. Component of the velvet transcription factor complex that acts as a global regulator for secondary metabolite gene expression. Controls the biosynthetic gene cluster for beauvericin, a depsipeptide mycotoxin that functions as a virulence determinant. The velvet complex also regulates chromatin structure and transcription of siderophore biosynthetic genes and is required for infection of tomato plants. The velvet complex also governs expression of nitrate metabolism genes. This Fusarium oxysporum f. sp. lycopersici (strain 4287 / CBS 123668 / FGSC 9935 / NRRL 34936) (Fusarium vascular wilt of tomato) protein is Secondary metabolism regulator laeA.